Consider the following 206-residue polypeptide: Ribosomal RNA large subunit methyltransferase E (206 aa).

The S-adenosyl-L-methionine site is built by G60, W62, D80, D96, and D121. The active-site Proton acceptor is the K161.

Belongs to the class I-like SAM-binding methyltransferase superfamily. RNA methyltransferase RlmE family.

Its subcellular location is the cytoplasm. It catalyses the reaction uridine(2552) in 23S rRNA + S-adenosyl-L-methionine = 2'-O-methyluridine(2552) in 23S rRNA + S-adenosyl-L-homocysteine + H(+). Its function is as follows. Specifically methylates the uridine in position 2552 of 23S rRNA at the 2'-O position of the ribose in the fully assembled 50S ribosomal subunit. The protein is Ribosomal RNA large subunit methyltransferase E of Hydrogenovibrio crunogenus (strain DSM 25203 / XCL-2) (Thiomicrospira crunogena).